A 143-amino-acid chain; its full sequence is Transcriptional regulator MraZ (143 aa).

2 SpoVT-AbrB domains span residues 5–47 (SHTP…PMAE) and 76–119 (AADD…DAQR).

It belongs to the MraZ family. In terms of assembly, forms oligomers.

The protein localises to the cytoplasm. The protein resides in the nucleoid. The protein is Transcriptional regulator MraZ of Frankia alni (strain DSM 45986 / CECT 9034 / ACN14a).